The sequence spans 116 residues: uncharacterized protein (116 aa).

This is an uncharacterized protein from Methanocaldococcus jannaschii (strain ATCC 43067 / DSM 2661 / JAL-1 / JCM 10045 / NBRC 100440) (Methanococcus jannaschii).